Reading from the N-terminus, the 511-residue chain is Glucans biosynthesis protein G (511 aa).

The signal sequence occupies residues 1-22; it reads MMKMRWLGAAIMLTLYASSSWA.

This sequence belongs to the OpgD/OpgG family.

The protein resides in the periplasm. The protein operates within glycan metabolism; osmoregulated periplasmic glucan (OPG) biosynthesis. Involved in the biosynthesis of osmoregulated periplasmic glucans (OPGs). This is Glucans biosynthesis protein G from Salmonella enteritidis PT4 (strain P125109).